The chain runs to 130 residues: Ion transport peptide (130 aa).

3 disulfide bridges follow: cysteine 62-cysteine 98, cysteine 78-cysteine 94, and cysteine 81-cysteine 107. A Leucine amide modification is found at leucine 127.

It belongs to the arthropod CHH/MIH/GIH/VIH hormone family. As to expression, brain and corpus cardiacum.

Its subcellular location is the secreted. Its function is as follows. Stimulates salt and water reabsorption and inhibits acid secretion in the ileum of S.gregaria. In Schistocerca gregaria (Desert locust), this protein is Ion transport peptide.